A 297-amino-acid polypeptide reads, in one-letter code: Tyrosine recombinase XerD (297 aa).

One can recognise a Core-binding (CB) domain in the interval Met1–Ile87. The region spanning Lys108–Gln291 is the Tyr recombinase domain. Residues Arg147, Lys171, His243, Arg246, and His269 contribute to the active site. Tyr278 acts as the O-(3'-phospho-DNA)-tyrosine intermediate in catalysis.

This sequence belongs to the 'phage' integrase family. XerD subfamily. As to quaternary structure, forms a cyclic heterotetrameric complex composed of two molecules of XerC and two molecules of XerD.

Its subcellular location is the cytoplasm. In terms of biological role, site-specific tyrosine recombinase, which acts by catalyzing the cutting and rejoining of the recombining DNA molecules. The XerC-XerD complex is essential to convert dimers of the bacterial chromosome into monomers to permit their segregation at cell division. It also contributes to the segregational stability of plasmids. The sequence is that of Tyrosine recombinase XerD from Oceanobacillus iheyensis (strain DSM 14371 / CIP 107618 / JCM 11309 / KCTC 3954 / HTE831).